Consider the following 701-residue polypeptide: Polyribonucleotide nucleotidyltransferase (701 aa).

Mg(2+) contacts are provided by aspartate 485 and aspartate 491. The KH domain occupies 552-611; that stretch reads PRIIKIRINPEKIRDVIGKGGAVIRALTEETGTTIDITDDGTVMIACVNAEGGELAKKRI. Residues 621–689 form the S1 motif domain; sequence GRVYDGTVLK…DKGRLRLSMK (69 aa).

This sequence belongs to the polyribonucleotide nucleotidyltransferase family. Requires Mg(2+) as cofactor.

It is found in the cytoplasm. The enzyme catalyses RNA(n+1) + phosphate = RNA(n) + a ribonucleoside 5'-diphosphate. In terms of biological role, involved in mRNA degradation. Catalyzes the phosphorolysis of single-stranded polyribonucleotides processively in the 3'- to 5'-direction. This Nitrosospira multiformis (strain ATCC 25196 / NCIMB 11849 / C 71) protein is Polyribonucleotide nucleotidyltransferase.